A 139-amino-acid polypeptide reads, in one-letter code: Large ribosomal subunit protein bL17 (139 aa).

It belongs to the bacterial ribosomal protein bL17 family. Part of the 50S ribosomal subunit. Contacts protein L32.

The polypeptide is Large ribosomal subunit protein bL17 (Cereibacter sphaeroides (strain ATCC 17029 / ATH 2.4.9) (Rhodobacter sphaeroides)).